The following is a 908-amino-acid chain: Protein translocase subunit SecA (908 aa).

Residues Gln87, 105 to 109, and Asp511 each bind ATP; that span reads GEGKT. Over residues 559–570 the composition is skewed to basic and acidic residues; the sequence is ERHESRRIDNQL. Disordered stretches follow at residues 559–582 and 841–908; these read ERHESRRIDNQLRGRSGRQGDPGS and RRRR…GRLE. Residues 847-856 show a composition bias toward low complexity; the sequence is LAQQMQRAQA. A compositionally biased stretch (acidic residues) spans 862–873; it reads TEEDSDAEEQAE. Zn(2+) is bound by residues Cys892, Cys894, Cys903, and His904. Over residues 898–908 the composition is skewed to basic residues; that stretch reads KKYKQCHGRLE.

The protein belongs to the SecA family. As to quaternary structure, monomer and homodimer. Part of the essential Sec protein translocation apparatus which comprises SecA, SecYEG and auxiliary proteins SecDF-YajC and YidC. The cofactor is Zn(2+).

It is found in the cell inner membrane. The protein localises to the cytoplasm. It carries out the reaction ATP + H2O + cellular proteinSide 1 = ADP + phosphate + cellular proteinSide 2.. Functionally, part of the Sec protein translocase complex. Interacts with the SecYEG preprotein conducting channel. Has a central role in coupling the hydrolysis of ATP to the transfer of proteins into and across the cell membrane, serving both as a receptor for the preprotein-SecB complex and as an ATP-driven molecular motor driving the stepwise translocation of polypeptide chains across the membrane. This Hahella chejuensis (strain KCTC 2396) protein is Protein translocase subunit SecA.